The chain runs to 429 residues: Gamma-glutamyl phosphate reductase (429 aa).

The protein belongs to the gamma-glutamyl phosphate reductase family.

It localises to the cytoplasm. The enzyme catalyses L-glutamate 5-semialdehyde + phosphate + NADP(+) = L-glutamyl 5-phosphate + NADPH + H(+). Its pathway is amino-acid biosynthesis; L-proline biosynthesis; L-glutamate 5-semialdehyde from L-glutamate: step 2/2. Functionally, catalyzes the NADPH-dependent reduction of L-glutamate 5-phosphate into L-glutamate 5-semialdehyde and phosphate. The product spontaneously undergoes cyclization to form 1-pyrroline-5-carboxylate. This Sphingopyxis alaskensis (strain DSM 13593 / LMG 18877 / RB2256) (Sphingomonas alaskensis) protein is Gamma-glutamyl phosphate reductase.